Reading from the N-terminus, the 358-residue chain is Peptide chain release factor 1 (358 aa).

At Gln233 the chain carries N5-methylglutamine.

The protein belongs to the prokaryotic/mitochondrial release factor family. Post-translationally, methylated by PrmC. Methylation increases the termination efficiency of RF1.

It is found in the cytoplasm. Peptide chain release factor 1 directs the termination of translation in response to the peptide chain termination codons UAG and UAA. This is Peptide chain release factor 1 from Staphylococcus epidermidis (strain ATCC 35984 / DSM 28319 / BCRC 17069 / CCUG 31568 / BM 3577 / RP62A).